The sequence spans 143 residues: Na(+)/H(+) antiporter subunit B (143 aa).

4 consecutive transmembrane segments (helical) span residues 9-31, 36-58, 71-93, and 117-139; these read LILQ…YLFL, APGG…LLAY, FIYV…FVFG, and ATIF…IQTI.

It belongs to the CPA3 antiporters (TC 2.A.63) subunit B family. As to quaternary structure, forms a heterooligomeric complex that consists of seven subunits: MrpA, MrpB, MrpC, MrpD, MrpE, MrpF and MrpG.

The protein localises to the cell membrane. In terms of biological role, mrp complex is a Na(+)/H(+) antiporter that is considered to be the major Na(+) excretion system in B.subtilis. Has a major role in Na(+) resistance and a minor role in Na(+)- and K(+)-dependent pH homeostasis as compared to TetB. MrpA may be the actual Na(+)/H(+) antiporter, although the six other Mrp proteins are all required for Na(+)/H(+) antiport activity and Na(+) resistance. MrpA is required for initiation of sporulation when external Na(+) concentration increases. Also transports Li(+) but not K(+), Ca(2+) or Mg(2+). This chain is Na(+)/H(+) antiporter subunit B (mrpB), found in Bacillus subtilis (strain 168).